The sequence spans 178 residues: MIAIYPGSFDPITLGHLDIIERGDRLFEKVIVAVLCNPSKSPIFSLEKRVAQIRRCTQHLPNVEVASFTGLTTDYARQRNAGVLLRGLRVLSDFEKELQMAHTNKTLWDNIETVFLATSNEYSFLSSSVVKEIAKFGGSVDHLVPDNVAEDLYQWYKVHPPQVSPPTIMPTPQPFIEG.

Ser-8 contributes to the substrate binding site. Residues 8–9 (SF) and His-16 contribute to the ATP site. Lys-40, Thr-72, and Arg-86 together coordinate substrate. Residues 87-89 (GLR), Glu-97, and 122-128 (YSFLSSS) each bind ATP.

It belongs to the bacterial CoaD family. Homohexamer. It depends on Mg(2+) as a cofactor.

It localises to the cytoplasm. The enzyme catalyses (R)-4'-phosphopantetheine + ATP + H(+) = 3'-dephospho-CoA + diphosphate. It participates in cofactor biosynthesis; coenzyme A biosynthesis; CoA from (R)-pantothenate: step 4/5. Reversibly transfers an adenylyl group from ATP to 4'-phosphopantetheine, yielding dephospho-CoA (dPCoA) and pyrophosphate. The chain is Phosphopantetheine adenylyltransferase from Picosynechococcus sp. (strain ATCC 27264 / PCC 7002 / PR-6) (Agmenellum quadruplicatum).